Consider the following 510-residue polypeptide: Ninja-family protein mc410 (510 aa).

Disordered stretches follow at residues 1 to 179 (MDEN…RQIL), 323 to 414 (HPSH…PSEF), and 481 to 510 (RHAS…SAQS). Basic and acidic residues-rich tracts occupy residues 31–44 (SKVE…KVIN) and 103–146 (RPVE…DKTR). Polar residues predominate over residues 148–160 (SHISITTDEGSTA). 2 stretches are compositionally biased toward basic and acidic residues: residues 363-389 (RAME…EENV) and 397-406 (RAKDPPDQPR). The segment covering 485-496 (VEQTSQEPGTGV) has biased composition (polar residues). Over residues 497–510 (SSFPSSNPAASAQS) the composition is skewed to low complexity.

It belongs to the Ninja family.

The protein resides in the nucleus. This chain is Ninja-family protein mc410 (MC410), found in Nicotiana tabacum (Common tobacco).